We begin with the raw amino-acid sequence, 423 residues long: Gamma-glutamyl phosphate reductase (423 aa).

It belongs to the gamma-glutamyl phosphate reductase family.

The protein resides in the cytoplasm. The enzyme catalyses L-glutamate 5-semialdehyde + phosphate + NADP(+) = L-glutamyl 5-phosphate + NADPH + H(+). The protein operates within amino-acid biosynthesis; L-proline biosynthesis; L-glutamate 5-semialdehyde from L-glutamate: step 2/2. In terms of biological role, catalyzes the NADPH-dependent reduction of L-glutamate 5-phosphate into L-glutamate 5-semialdehyde and phosphate. The product spontaneously undergoes cyclization to form 1-pyrroline-5-carboxylate. This Paraburkholderia phymatum (strain DSM 17167 / CIP 108236 / LMG 21445 / STM815) (Burkholderia phymatum) protein is Gamma-glutamyl phosphate reductase.